Reading from the N-terminus, the 623-residue chain is Chaperone protein HtpG (623 aa).

The segment at 1–336 is a; substrate-binding; it reads MSETNTQKAA…TEDLPLNVSR (336 aa). The tract at residues 337–546 is b; it reads EMLQATPVLA…DGGPDLTMQR (210 aa). The tract at residues 547 to 623 is c; the sequence is LMRRSGQAMP…ATLLAGPAAE (77 aa).

Belongs to the heat shock protein 90 family. As to quaternary structure, homodimer.

It is found in the cytoplasm. Functionally, molecular chaperone. Has ATPase activity. The protein is Chaperone protein HtpG of Gluconobacter oxydans (strain 621H) (Gluconobacter suboxydans).